The chain runs to 711 residues: MEKRGPKRRQQAAHLSCELCRERKVKCDKLDPCTNCSSAGVICVPVRRPRLPRGAHAQRLRRNSPEDPEAPIQIDIASPADAGTIADDDLKKRIRRLEALVDSMRSSSHISKQDQEAEDTIESTLNRIDDDSLLIKTPRVHPSDGGLRILGLSGSSSPETGWASILEDREISMQLCQVYLLNVDPVIKILHRPSVEKWMLQGQRYLGFPERHSAVESLGAAICYVAATSLTETQSWARFHATKSSIVARARRACETTLEKSSPLLSPVITTLQAFLLYLHESFIEQNVLIPLKTHQVARRSEDPSRAVWTLMAFAVRIAKALDLPRGAGDNFFGQQMRKRLWLAICLLDFQTSLSQPSEPLITVAEATSSFSPPKHINDSDFDPTTSHDVPDREGLTDTTFSLVSYHVQAAGRLLNFEPSVKDDGSRQQNVQHFEQRTLRLLLYCDPESTPYAWFTWHRIQCFVSGARLSAIRPLMHQHGDHPISILDTNEGTSILSLALNILEKVQLVHTDPRGEAFRWFVTVPWQPLAIAMSECYICQDIALVQRAWPIVEAAFQQHEATVSGSSKAISITLERLMCRVREKLSPSLGTSTSLTASPIFCATNTANTLSVPHTPPSRSSITSSGDLLGNWSWTTATELLRPGEDLALVTEAPISTSPQKIDPLLFSLDSQLLIAGQEQLVEADQSWAAWDEVIASLHDDETGRANMFLS.

The segment at residues 17–43 is a DNA-binding region (zn(2)-C6 fungal-type); that stretch reads CELCRERKVKCDKLDPCTNCSSAGVIC. Positions 372-394 are disordered; sequence SPPKHINDSDFDPTTSHDVPDRE.

The protein resides in the nucleus. Transcription factor that specifically regulates the neosartoricin B biosynthesis gene cluster. This chain is C6 finger domain transcription factor nscR, found in Trichophyton tonsurans (strain CBS 112818) (Scalp ringworm fungus).